Consider the following 265-residue polypeptide: Cytochrome c oxidase subunit 3 (265 aa).

A run of 6 helical transmembrane segments spans residues 16 to 36 (PWPISGSLGALATTVGGVMYM), 41 to 61 (GGATLLSLGLIFLLYTMFVWW), 84 to 104 (YGSILFIVSEVMSFFLFFWAS), 162 to 182 (AVYALVATVLLALVSTGFQGM), 200 to 220 (FLLATGFHGFHVIIGTLFLIV), and 242 to 262 (AWYWHFVDVVRLFPFVSIYWW).

It belongs to the cytochrome c oxidase subunit 3 family. Component of the cytochrome c oxidase (complex IV, CIV), a multisubunit enzyme composed of a catalytic core of 3 subunits and several supernumerary subunits. The complex exists as a monomer or a dimer and forms supercomplexes (SCs) in the inner mitochondrial membrane with ubiquinol-cytochrome c oxidoreductase (cytochrome b-c1 complex, complex III, CIII).

It localises to the mitochondrion inner membrane. It catalyses the reaction 4 Fe(II)-[cytochrome c] + O2 + 8 H(+)(in) = 4 Fe(III)-[cytochrome c] + 2 H2O + 4 H(+)(out). Component of the cytochrome c oxidase, the last enzyme in the mitochondrial electron transport chain which drives oxidative phosphorylation. The respiratory chain contains 3 multisubunit complexes succinate dehydrogenase (complex II, CII), ubiquinol-cytochrome c oxidoreductase (cytochrome b-c1 complex, complex III, CIII) and cytochrome c oxidase (complex IV, CIV), that cooperate to transfer electrons derived from NADH and succinate to molecular oxygen, creating an electrochemical gradient over the inner membrane that drives transmembrane transport and the ATP synthase. Cytochrome c oxidase is the component of the respiratory chain that catalyzes the reduction of oxygen to water. Electrons originating from reduced cytochrome c in the intermembrane space (IMS) are transferred via the dinuclear copper A center (CU(A)) of subunit 2 and heme A of subunit 1 to the active site in subunit 1, a binuclear center (BNC) formed by heme A3 and copper B (CU(B)). The BNC reduces molecular oxygen to 2 water molecules using 4 electrons from cytochrome c in the IMS and 4 protons from the mitochondrial matrix. This is Cytochrome c oxidase subunit 3 (COX3) from Zea mays (Maize).